Reading from the N-terminus, the 811-residue chain is Probable disease resistance protein At5g04720 (811 aa).

Residues 1–147 (MADIIGGEVV…KVDSLNEKLG (147 aa)) form the RPW8 domain. 2 consecutive NB-ARC domains span residues 180-242 (VGLD…VSQS) and 312-437 (TYDV…NVLV). Residue 207 to 214 (GMSGSGKT) participates in ATP binding. LRR repeat units follow at residues 650 to 674 (FPKL…ICGI), 676 to 699 (SLNS…SKLK), 700 to 722 (ALQL…ICEL), 724 to 746 (RLKY…IGKV), and 748 to 769 (TLEK…VVLL).

Belongs to the disease resistance NB-LRR family.

In terms of biological role, probable disease resistance protein. This Arabidopsis thaliana (Mouse-ear cress) protein is Probable disease resistance protein At5g04720.